The primary structure comprises 808 residues: Sucrose synthase isoform 1 (808 aa).

A GT-B glycosyltransferase region spans residues 277-754 (MVFNVVILSP…GLKRIQEKYT (478 aa)).

It belongs to the glycosyltransferase 1 family. Plant sucrose synthase subfamily. As to quaternary structure, homotetramer. Expressed in stems, in roots at different developmental stages, and in flower buds, flowers and maturing seeds, with the highest levels in strong utilization sinks for sucrose such as growing stems and tap root tips.

It catalyses the reaction an NDP-alpha-D-glucose + D-fructose = a ribonucleoside 5'-diphosphate + sucrose + H(+). With respect to regulation, fructose acts as a non-competitive inhibitor with an inhibition constant of 17.2 mM. In contrast, glucose inhibits uncompetitively with an inhibition constant of 4.3 mM. Functionally, sucrose-cleaving enzyme that provides UDP-glucose and fructose for various metabolic pathways. The sequence is that of Sucrose synthase isoform 1 from Daucus carota (Wild carrot).